Consider the following 166-residue polypeptide: Phospholipase A2 inhibitor clone 08 (166 aa).

The first 19 residues, 1-19, serve as a signal peptide directing secretion; the sequence is MRLILLSSLLLLGIFLANG. The C-type lectin domain maps to 46 to 161; it reads LKGAFLTVHR…CDDNLLVVCE (116 aa). 2 disulfide bridges follow: C83–C160 and C138–C152. N-linked (GlcNAc...) asparagine glycosylation occurs at N122.

This sequence belongs to the alpha-type phospholipase A2 inhibitor family. As to quaternary structure, homotrimer; non-covalently linked. As to expression, expressed by the liver.

The protein localises to the secreted. Its function is as follows. This phospholipase A2 inhibitor binds directly phospholipase A2 in the presence or absence of calcium. The chain is Phospholipase A2 inhibitor clone 08 from Bothrops moojeni (Lance-headed viper).